A 210-amino-acid polypeptide reads, in one-letter code: Protein RCR2 (210 aa).

Residues 41–61 form a helical membrane-spanning segment; it reads WIFFIFFIVALLILLFSTAKV. Positions 125–149 are disordered; sequence PNGKTEYLAPPPLSEEQASSTDKDL. A Phosphoserine modification is found at S161. Residues 175 to 199 show a composition bias toward polar residues; that stretch reads NNFVNGQSNRNEQHSPTVESSSFDV. The disordered stretch occupies residues 175-210; the sequence is NNFVNGQSNRNEQHSPTVESSSFDVNNAPARAKVSK. T191 carries the phosphothreonine modification.

It to yeast YBR005W.

It is found in the membrane. This Saccharomyces cerevisiae (strain ATCC 204508 / S288c) (Baker's yeast) protein is Protein RCR2 (RCR2).